The chain runs to 189 residues: Peptidyl-tRNA hydrolase (189 aa).

Y14 serves as a coordination point for tRNA. Catalysis depends on H19, which acts as the Proton acceptor. 3 residues coordinate tRNA: Y64, N66, and N112.

Belongs to the PTH family. As to quaternary structure, monomer.

It localises to the cytoplasm. It catalyses the reaction an N-acyl-L-alpha-aminoacyl-tRNA + H2O = an N-acyl-L-amino acid + a tRNA + H(+). In terms of biological role, hydrolyzes ribosome-free peptidyl-tRNAs (with 1 or more amino acids incorporated), which drop off the ribosome during protein synthesis, or as a result of ribosome stalling. Catalyzes the release of premature peptidyl moieties from peptidyl-tRNA molecules trapped in stalled 50S ribosomal subunits, and thus maintains levels of free tRNAs and 50S ribosomes. The sequence is that of Peptidyl-tRNA hydrolase from Clostridium botulinum (strain Kyoto / Type A2).